Reading from the N-terminus, the 253-residue chain is 5'-nucleotidase SurE (253 aa).

4 residues coordinate a divalent metal cation: D8, D9, S39, and N95.

This sequence belongs to the SurE nucleotidase family. Requires a divalent metal cation as cofactor.

Its subcellular location is the cytoplasm. The catalysed reaction is a ribonucleoside 5'-phosphate + H2O = a ribonucleoside + phosphate. Functionally, nucleotidase that shows phosphatase activity on nucleoside 5'-monophosphates. This Kosmotoga olearia (strain ATCC BAA-1733 / DSM 21960 / TBF 19.5.1) protein is 5'-nucleotidase SurE.